Reading from the N-terminus, the 622-residue chain is Probable Xaa-Pro aminopeptidase P (622 aa).

Residues aspartate 419, aspartate 430, glutamate 528, and glutamate 542 each coordinate Mn(2+).

The protein belongs to the peptidase M24B family. It depends on Mn(2+) as a cofactor.

It carries out the reaction Release of any N-terminal amino acid, including proline, that is linked to proline, even from a dipeptide or tripeptide.. Catalyzes the removal of a penultimate prolyl residue from the N-termini of peptides. The polypeptide is Probable Xaa-Pro aminopeptidase P (AMPP) (Coprinopsis cinerea (strain Okayama-7 / 130 / ATCC MYA-4618 / FGSC 9003) (Inky cap fungus)).